The following is a 351-amino-acid chain: uncharacterized protein (351 aa).

The disordered stretch occupies residues 25-67 (KKAETETLPPANSQPAAPAPEAKPTEAPVAKAEAKPETPAQPV). The segment covering 33-55 (PPANSQPAAPAPEAKPTEAPVAK) has biased composition (low complexity).

This is an uncharacterized protein from Escherichia coli (strain K12).